We begin with the raw amino-acid sequence, 399 residues long: Probable 3-ketosteroid-9-alpha-monooxygenase, oxygenase component (399 aa).

In terms of domain architecture, Rieske spans 26 to 128 (WHCLGLVRDF…VAEVSGQLFV (103 aa)). [2Fe-2S] cluster-binding residues include Cys67, His69, Cys86, and His89. Fe cation-binding residues include Asn175, His181, His186, and Asp307.

In terms of assembly, homotrimer. The two-component system 3-ketosteroid-9-alpha-monooxygenase is composed of an oxygenase component KshA and a reductase component KshB. [2Fe-2S] cluster serves as cofactor. Requires Fe cation as cofactor.

Functionally, could catalyze the introduction of a 9alpha-hydroxyl moiety into the ring B of 3-ketosteroid substrates. In Rhodococcus rhodochrous, this protein is Probable 3-ketosteroid-9-alpha-monooxygenase, oxygenase component.